We begin with the raw amino-acid sequence, 567 residues long: TNF receptor-associated factor 3 (567 aa).

A disordered region spans residues 1-26; the sequence is MESSKKMDAAGTLQPNPPLKLQPDRG. Cysteine 55 participates in a covalent cross-link: Glycyl cysteine thioester (Cys-Gly) (interchain with G-Cter in ubiquitin). The segment at 67 to 76 adopts an RING-type zinc-finger fold; sequence CGHRFCESCM. A Glycyl lysine isopeptide (Lys-Gly) (interchain with G-Cter in ubiquitin) cross-link involves residue lysine 106. A Glycyl cysteine thioester (Cys-Gly) (interchain with G-Cter in ubiquitin) cross-link involves residue cysteine 123. TRAF-type zinc fingers lie at residues 134-189 and 190-248; these read VHLK…IKLQ and KHED…QQIK. Glycyl lysine isopeptide (Lys-Gly) (interchain with G-Cter in ubiquitin) cross-links involve residues lysine 155 and lysine 167. Positions 266–337 form a coiled coil; it reads SNSLEKKVSL…KLKELDKEIR (72 aa). A Glycyl lysine isopeptide (Lys-Gly) (interchain with G-Cter in ubiquitin) cross-link involves residue lysine 328. The region spanning 414-559 is the MATH domain; it reads NGVLIWKIRD…DDTIFIKVIV (146 aa).

Belongs to the TNF receptor-associated factor family. A subfamily. As to quaternary structure, homotrimer. Heterotrimer with TRAF2 and TRAF5. Interacts with LTBR/TNFRSF3, TNFRSF4, TNFRSF5/CD40, TNFRSF8/CD30, TNFRSF13C TNFRSF17/BCMA, TLR4 and EDAR. Interacts with MAP3K5, MAP3K14, TRAIP/TRIP, TDP2/TTRAP, TANK/ITRAF and TRAF3IP1. Interaction with TNFRSF5/CD40 is modulated by TANK/ITRAF, which competes for the same binding site. Interacts with TICAM1. Interacts with TRAFD1. Interacts with OTUB1, OTUB2 and OTUD5. Interacts with RNF216, OPTN and TBK1. Identified in a complex with TRAF2, MAP3K14 and BIRC3. Upon exposure to bacterial lipopolysaccharide (LPS), recruited to a transient complex containing TLR4, TRAF3, TRAF6, IKBKG, MAP3K7, MYD88, TICAM1, BIRC2, BIRC3 and UBE2N. Interacts (via RING-type zinc finger domain) with SRC. Interacts with CARD14. Interacts (via MATH domain) with PTPN22; the interaction promotes TRAF3 polyubiquitination. Interacts with MAVS. Directly interacts with DDX3X; this interaction stimulates TRAF3 'Lys-63' ubiquitination. Interacts with IRF3. Interacts with IKBKE in the course of viral infection. Interacts with TRIM35. Interacts with GAPDH; promoting TRAF3 ubiquitination. Interacts with PPP3CA and PPP3CB. Interacts with RALGDS. Interacts with FBXO11. Post-translationally, undergoes 'Lys-48'-linked polyubiquitination, leading to its proteasomal degradation in response to signaling by TNFSF13B, TLR4 or through CD40. 'Lys-48'-linked polyubiquitinated form is deubiquitinated by OTUD7B, preventing TRAF3 proteolysis and over-activation of non-canonical NF-kappa-B. Undergoes 'Lys-63'-linked ubiquitination during early stages of virus infection, and 'Lys-48'-linked ubiquitination during later stages. Undergoes both 'Lys-48'-linked and 'Lys-63'-linked ubiquitination in response to TLR3 and TLR4 signaling. 'Lys-63'-linked ubiquitination can be mediated by TRIM35. Deubiquitinated by OTUB1, OTUB2 and OTUD5. Undergoes 'Lys-63'-linked deubiquitination by MYSM1 to terminate the pattern-recognition receptors/PRRs pathways. Ubiquitinated at Lys-328 by the SCF(FBXL2) complex, leading to its degradation by the proteasome. In terms of processing, undergoes 'Lys-48'-linked polyubiquitination, leading to its proteasomal degradation in response to signaling by TNFSF13B, TLR4 or through CD40. 'Lys-48'-linked polyubiquitinated form is deubiquitinated by OTUD7B, preventing TRAF3 proteolysis and over-activation of non-canonical NF-kappa-B. Undergoes 'Lys-63'-linked ubiquitination during early stages of virus infection, and 'Lys-48'-linked ubiquitination during later stages. Undergoes both 'Lys-48'-linked and 'Lys-63'-linked ubiquitination in response to TLR3 and TLR4 signaling. 'Lys-63'-linked ubiquitination can be mediated by TRIM35. Deubiquitinated by OTUB1, OTUB2 and OTUD5. Undergoes 'Lys-63'-linked deubiquitination by MYSM1 to terminate the pattern-recognition receptors/PRRs pathways. Also undergoes 'Lys-29'-linked ubiquitination on Cys-55 and Cys-123 by NEDD4L; leading to increased 'Lys-48'- and 'Lys-63'-linked ubiquitination as well as increased binding to TBK1. TLR4 signals emanating from bacteria containing vesicles trigger 'Lys-33'-linked polyubiquitination that promotes the assembly of the exocyst complex thereby connecting innate immune signaling to the cellular trafficking apparatus. Deubiquitinated by USP25 during viral infection, leading to TRAF3 stabilization and type I interferon production. 'Lys-63'-linked ubiquitination by FBXO11 in a NEDD8-dependent manner promotes the amplification of IFN-I signaling. As to expression, detected in bone marrow macrophages and spleen B-cells (at protein level). In adult, highest in brain. Also found in kidney, heart, thymus, spleen, lung, muscle, testis and ovary. Not found in liver.

It is found in the cytoplasm. The protein localises to the endosome. The protein resides in the mitochondrion. It carries out the reaction S-ubiquitinyl-[E2 ubiquitin-conjugating enzyme]-L-cysteine + [acceptor protein]-L-lysine = [E2 ubiquitin-conjugating enzyme]-L-cysteine + N(6)-ubiquitinyl-[acceptor protein]-L-lysine.. In terms of biological role, cytoplasmic E3 ubiquitin ligase that regulates various signaling pathways, such as the NF-kappa-B, mitogen-activated protein kinase (MAPK) and interferon regulatory factor (IRF) pathways, and thus controls a lot of biological processes in both immune and non-immune cell types. In TLR and RLR signaling pathways, acts as an E3 ubiquitin ligase promoting the synthesis of 'Lys-63'-linked polyubiquitin chains on several substrates such as ASC that lead to the activation of the type I interferon response or the inflammasome. Following the activation of certain TLRs such as TLR4, acts as a negative NF-kappa-B regulator, possibly to avoid unregulated inflammatory response, and its degradation via 'Lys-48'-linked polyubiquitination is required for MAPK activation and production of inflammatory cytokines. Alternatively, when TLR4 orchestrates bacterial expulsion, TRAF3 undergoes 'Lys-33'-linked polyubiquitination and subsequently binds to RALGDS, mobilizing the exocyst complex to rapidly expel intracellular bacteria back for clearance. Also acts as a constitutive negative regulator of the alternative NF-kappa-B pathway, which controls B-cell survival and lymphoid organ development. Required for normal antibody isotype switching from IgM to IgG. Plays a role T-cell dependent immune responses. Down-regulates proteolytic processing of NFKB2, and thereby inhibits non-canonical activation of NF-kappa-B. Promotes ubiquitination and proteasomal degradation of MAP3K14. The polypeptide is TNF receptor-associated factor 3 (Mus musculus (Mouse)).